Consider the following 274-residue polypeptide: 2,3,4,5-tetrahydropyridine-2,6-dicarboxylate N-succinyltransferase (274 aa).

Residues Arg106 and Asp143 each contribute to the substrate site.

It belongs to the transferase hexapeptide repeat family. As to quaternary structure, homotrimer.

The protein resides in the cytoplasm. It carries out the reaction (S)-2,3,4,5-tetrahydrodipicolinate + succinyl-CoA + H2O = (S)-2-succinylamino-6-oxoheptanedioate + CoA. It functions in the pathway amino-acid biosynthesis; L-lysine biosynthesis via DAP pathway; LL-2,6-diaminopimelate from (S)-tetrahydrodipicolinate (succinylase route): step 1/3. This Rickettsia akari (strain Hartford) protein is 2,3,4,5-tetrahydropyridine-2,6-dicarboxylate N-succinyltransferase.